The primary structure comprises 2596 residues: Cadherin EGF LAG seven-pass G-type receptor fmi-1 (2596 aa).

The N-terminal stretch at 1-22 is a signal peptide; the sequence is MMLDRIMFLLFFILSLVIGSFS. Residues 23 to 2229 are Extracellular-facing; it reads EYLDDKYYST…IVRVAQMDNM (2207 aa). 8 Cadherin domains span residues 166–270, 271–375, 376–479, 480–581, 582–682, 683–784, 785–892, and 893–1000; these read QQEK…SPIF, EKDS…APVF, ASDS…APTL, IAAQ…APTF, DKKE…APYF, NDHP…SPQF, TSSS…APTF, and EQLS…KPAL. 6 N-linked (GlcNAc...) asparagine glycosylation sites follow: Asn-381, Asn-387, Asn-562, Asn-587, Asn-765, and Asn-824. 2 N-linked (GlcNAc...) asparagine glycosylation sites follow: Asn-1030 and Asn-1263. The EGF-like 1 domain occupies 1251–1287; the sequence is RIDECYRGRCSNNSTCVAFENTYQCECKPGWIGRHCE. Intrachain disulfides connect Cys-1255-Cys-1266, Cys-1260-Cys-1275, Cys-1277-Cys-1286, Cys-1497-Cys-1526, Cys-1533-Cys-1546, Cys-1540-Cys-1555, Cys-1557-Cys-1567, Cys-1709-Cys-1732, Cys-1738-Cys-1750, Cys-1744-Cys-1759, Cys-1761-Cys-1770, and Cys-1780-Cys-1785. Residues 1333–1526 enclose the Laminin G-like 1 domain; that stretch reads SVSFDGEGLL…HKVGQVHEGC (194 aa). The region spanning 1529–1568 is the EGF-like 2 domain; sequence RKDFCSTSDGQCSATSKCVNRWGGRICSCPQSVHSTGECV. The Laminin G-like 2 domain maps to 1577–1732; it reads RGHSLFEEES…KKKGKTRAGC (156 aa). 2 EGF-like domains span residues 1734-1771 and 1776-1808; these read VPNR…DTCL and VANV…KNCQ. Residue Asn-1789 is glycosylated (N-linked (GlcNAc...) asparagine). The cysteines at positions 1798 and 1807 are disulfide-linked. N-linked (GlcNAc...) asparagine glycans are attached at residues Asn-1965, Asn-1992, Asn-2152, Asn-2195, and Asn-2228. In terms of domain architecture, GAIN-B spans 2054–2219; sequence EYSTLISKLW…TMFVNDQSSS (166 aa). An intrachain disulfide couples Cys-2174 to Cys-2201. A GPS region spans residues 2174–2219; it reads CVRFDEKSGTWTARGAALIGLNLTHAACEYNRIGVFTMFVNDQSSS. A helical transmembrane segment spans residues 2230–2250; it reads TSPAIAGVALFLCFLSILLTL. Over 2251–2261 the chain is Cytoplasmic; it reads SRRSLKTHSVR. The helical transmembrane segment at 2262–2282 threads the bilayer; sequence IGFILFFAINILNLFFVHKTA. At 2283 to 2292 the chain is on the extracellular side; that stretch reads INQAYCPVRN. A helical transmembrane segment spans residues 2293-2313; the sequence is AMLSFTSSAPFAWLFLYGLYI. Over 2314–2326 the chain is Cytoplasmic; the sequence is YRMLADGSSSPSL. Residues 2327-2347 traverse the membrane as a helical segment; the sequence is TTSLLVGIVFPCLISFTTFFV. Over 2348–2356 the chain is Extracellular; sequence TDQCSLSPH. Residues 2357–2377 form a helical membrane-spanning segment; sequence LWLFWCIILPIGLFLLLSFYA. The Cytoplasmic segment spans residues 2378–2401; it reads AATSVLVSLHKKYDVFVAKYNVKR. The chain crosses the membrane as a helical span at residues 2402–2422; that stretch reads AVFQHFILTIFTLGMTLTGLF. Residues 2423 to 2437 are Extracellular-facing; the sequence is ANQLPLPMEIMEISQ. The helical transmembrane segment at 2438-2458 threads the bilayer; that stretch reads SIIYLIAALVIFLWCVCDITT. Over 2459 to 2596 the chain is Cytoplasmic; it reads KASDSNPSMW…KNTTSTFNRE (138 aa).

Belongs to the G-protein coupled receptor 2 family. LN-TM7 subfamily. In terms of tissue distribution, expressed in a region of neuropil around the nerve ring and the ventral cord (at protein level). Expressed in the head, tail, ventral cord, nerve ring and neurons including HSN neurons. Expressed in DA, VA, and VB and weakly in the DB cholinergic neurons. Not expressed in ventral D-type GABAergic motorneurons.

Its subcellular location is the cell membrane. The protein resides in the cell projection. It is found in the axon. The protein localises to the dendrite. In terms of biological role, during ventral cord development, required for axon fasciculation and navigation, mediating both pioneer and follower axon extension, guidance and track formation. Acts in CEPsh glia and SubL neurons to guide follower axons into the nerve ring. Promotes motorneuron development by positively regulating the extension of the anterior neurite of ventral D-type GABAergic motorneurons along the anterior-posterior axis of the ventral nerve cord. Plays a role in synaptogenesis by regulating synaptic vesicle accumulation at GABAergic and cholinergic neuromuscular junctions. The polypeptide is Cadherin EGF LAG seven-pass G-type receptor fmi-1 (Caenorhabditis elegans).